Here is a 623-residue protein sequence, read N- to C-terminus: Chaperone protein DnaK (623 aa).

T175 is modified (phosphothreonine; by autocatalysis). Residues 578–623 (ANPEGAPGAGFDPNNMGGANAGNASAGNDKKDDNVVDADFKVEDDK) form a disordered region. Low complexity predominate over residues 591–604 (NNMGGANAGNASAG). Basic and acidic residues predominate over residues 605-623 (NDKKDDNVVDADFKVEDDK).

Belongs to the heat shock protein 70 family.

Functionally, acts as a chaperone. This chain is Chaperone protein DnaK, found in Clostridium botulinum (strain 657 / Type Ba4).